A 208-amino-acid chain; its full sequence is FMN-dependent NADH:quinone oxidoreductase 3 (208 aa).

This sequence belongs to the azoreductase type 1 family. In terms of assembly, homodimer. Requires FMN as cofactor.

The catalysed reaction is 2 a quinone + NADH + H(+) = 2 a 1,4-benzosemiquinone + NAD(+). The enzyme catalyses N,N-dimethyl-1,4-phenylenediamine + anthranilate + 2 NAD(+) = 2-(4-dimethylaminophenyl)diazenylbenzoate + 2 NADH + 2 H(+). Quinone reductase that provides resistance to thiol-specific stress caused by electrophilic quinones. Functionally, also exhibits azoreductase activity. Catalyzes the reductive cleavage of the azo bond in aromatic azo compounds to the corresponding amines. This Bacillus cereus (strain ATCC 14579 / DSM 31 / CCUG 7414 / JCM 2152 / NBRC 15305 / NCIMB 9373 / NCTC 2599 / NRRL B-3711) protein is FMN-dependent NADH:quinone oxidoreductase 3.